The following is a 34-amino-acid chain: Photosystem II reaction center protein M (34 aa).

The chain crosses the membrane as a helical span at residues 5–25 (ILAVIATALFVLIPTAFLLIL).

It belongs to the PsbM family. As to quaternary structure, PSII is composed of 1 copy each of membrane proteins PsbA, PsbB, PsbC, PsbD, PsbE, PsbF, PsbH, PsbI, PsbJ, PsbK, PsbL, PsbM, PsbT, PsbX, PsbY, PsbZ, Psb30/Ycf12, at least 3 peripheral proteins of the oxygen-evolving complex and a large number of cofactors. It forms dimeric complexes.

It is found in the plastid. The protein resides in the chloroplast thylakoid membrane. One of the components of the core complex of photosystem II (PSII). PSII is a light-driven water:plastoquinone oxidoreductase that uses light energy to abstract electrons from H(2)O, generating O(2) and a proton gradient subsequently used for ATP formation. It consists of a core antenna complex that captures photons, and an electron transfer chain that converts photonic excitation into a charge separation. This subunit is found at the monomer-monomer interface. This chain is Photosystem II reaction center protein M, found in Chaetosphaeridium globosum (Charophycean green alga).